The following is an 872-amino-acid chain: Sine oculis-binding protein homolog (872 aa).

Positions 1 to 14 (MAEMEKEGRPPENK) are enriched in basic and acidic residues. A disordered region spans residues 1-26 (MAEMEKEGRPPENKRSRKPAHPVKRE). FCS-type zinc fingers lie at residues 142–180 (DDVS…KCFA) and 216–256 (FKNN…KCLN). Disordered stretches follow at residues 308–354 (RRKA…KSMP), 411–484 (FIRG…PGAP), and 550–619 (KPPN…GRSE). A compositionally biased stretch (polar residues) spans 319–344 (GQSQGPGPSASTTVSPSDTANCSVTK). A compositionally biased stretch (low complexity) spans 417 to 433 (HHASNPNSPLSNPMLPG). Positions 460–484 (IHPPSTPTMPGNPPGLLPPPPPGAP) are enriched in pro residues. The SUMO interaction motif 1 (SIM); mediates the binding to polysumoylated substrates signature appears at 620-624 (VVDLT). At S629 the chain carries Phosphoserine. The SUMO interaction motif 2 (SIM); mediates the binding to polysumoylated substrates motif lies at 651–655 (VIDLT). K675 participates in a covalent cross-link: Glycyl lysine isopeptide (Lys-Gly) (interchain with G-Cter in SUMO2). S697 bears the Phosphoserine mark. The disordered stretch occupies residues 728–770 (AAEGAKGAEPPPEQPPPPPPPPPAPPKKLLSPEEPAVSELESV). The span at 736 to 753 (EPPPEQPPPPPPPPPAPP) shows a compositional bias: pro residues.

It belongs to the SOBP family. In terms of assembly, interacts (via SIM domains) with SUMO1 and SUMO2.

Functionally, implicated in development of the cochlea. This Bos taurus (Bovine) protein is Sine oculis-binding protein homolog.